The primary structure comprises 462 residues: Receptor like protein 29 (462 aa).

The first 26 residues, 1-26, serve as a signal peptide directing secretion; the sequence is MTMKRALPSPSSLLFFFLLITPLFLC. The Extracellular segment spans residues 27-441; the sequence is QENRVSASMP…SQASRYYRSC (415 aa). The N-linked (GlcNAc...) asparagine glycan is linked to N139. 10 LRR repeats span residues 139-164, 165-188, 190-212, 213-236, 238-260, 261-284, 286-308, 309-331, 332-355, and 357-381; these read NSSL…ISSL, KSLQ…IFSL, SLVH…LGNL, NNLV…ISQL, MLQK…VEKL, RSLS…ISNL, SLQY…LGFL, PKLQ…SYTK, LTNL…GFES, and PHVF…SFLR. N334, N363, and N416 each carry an N-linked (GlcNAc...) asparagine glycan. Residues 442-462 form a helical membrane-spanning segment; sequence FFANALFPFALFLGLHQRWVL.

The protein belongs to the RLP family.

The protein localises to the cell membrane. The polypeptide is Receptor like protein 29 (Arabidopsis thaliana (Mouse-ear cress)).